A 236-amino-acid polypeptide reads, in one-letter code: Bidirectional sugar transporter SWEET2 (236 aa).

Over 1-15 (MDVFAFNASLSMCKD) the chain is Extracellular. An N-linked (GlcNAc...) asparagine glycan is attached at asparagine 7. A helical transmembrane segment spans residues 16–36 (VAGIAGNIFAFGLFVSPMPTF). In terms of domain architecture, MtN3/slv 1 spans 18–103 (GIAGNIFAFG…ILFIMHTDKK (86 aa)). Topologically, residues 37–50 (RRIMRNKSTEQFSG) are cytoplasmic. The chain crosses the membrane as a helical span at residues 51 to 71 (LPYIYALLNCLICLWYGTPFI). The Extracellular segment spans residues 72–76 (SHSNA). Residues 77–97 (MLMTVNSVGATFQLCYIILFI) traverse the membrane as a helical segment. Topologically, residues 98 to 108 (MHTDKKNKMKM) are cytoplasmic. A helical transmembrane segment spans residues 109–129 (LGLLFVVFAVVGVIVAGSLQI). The Extracellular portion of the chain corresponds to 130-137 (PDQLTRWY). Residues 138-158 (FVGFLSCGSLVSMFASPLFVI) form a helical membrane-spanning segment. In terms of domain architecture, MtN3/slv 2 spans 138-221 (FVGFLSCGSL…LALYCYYHRN (84 aa)). The Cytoplasmic segment spans residues 159–170 (NLVIRTKSVEFM). Residues 171–191 (PFYLSLSTFLMSASFLLYGLF) form a helical membrane-spanning segment. Over 192–194 (NSD) the chain is Extracellular. Residues 195–215 (AFVYTPNGIGTILGIVQLALY) traverse the membrane as a helical segment. Over 216 to 236 (CYYHRNSIEEETKEPLIVSYV) the chain is Cytoplasmic.

The protein belongs to the SWEET sugar transporter family. In terms of assembly, forms heterooligomers with SWEET17.

Its subcellular location is the cell membrane. Mediates both low-affinity uptake and efflux of sugar across the plasma membrane. In Arabidopsis thaliana (Mouse-ear cress), this protein is Bidirectional sugar transporter SWEET2.